The chain runs to 855 residues: MKVKGTRRNYQHLWRWGTLLLGMLMICSATEKLWVTVYYGVPVWKEATTTLFCASDARAYDTEVHNVWATHACVPTDPNPQEVVLGNVTENFNMWKNNMVEQMQEDIISLWDQSLKPCVKLTPLCVTLNCTDLGKATNTNSSNWKEEIKGEIKNCSFNITTSIRDKIQKENALFRNLDVVPIDNASTTTNYTNYRLIHCNRSVITQACPKVSFEPIPIHYCTPAGFAILKCNNKTFNGKGPCTNVSTVQCTHGIRPIVSTQLLLNGSLAEEEVVIRSDNFTNNAKTIIVQLNESVAINCTRPNNNTRKSIYIGPGRAFHTTGRIIGDIRKAHCNISRAQWNNTLEQIVKKLREQFGNNKTIVFNQSSGGDPEIVMHSFNCRGEFFYCNTTQLFNNTWRLNHTEGTKGNDTIILPCRIKQIINMWQEVGKAMYAPPIGGQISCSSNITGLLLTRDGGTNVTNDTEVFRPGGGDMRDNWRSELYKYKVIKIEPLGIAPTKAKRRVVQREKRAVGIVGAMFLGFLGAAGSTMGAVSLTLTVQARQLLSGIVQQQNNLLRAIEAQQHLLQLTVWGIKQLQARVLAVERYLRDQQLLGIWGCSGKLICTTAVPWNASWSNKSLEDIWDNMTWMQWEREIDNYTNTIYTLLEESQNQQEKNEQELLELDKWASLWNWFSITNWLWYIKIFIMIVGGLVGLRIVFAVLSIVNRVRQGYSPLSFQTRLPVPRGPDRPDGIEEEGGERDRDRSVRLVDGFLALIWEDLRSLCLFSYRRLRDLLLIAARTVEILGHRGWEALKYWWSLLQYWIQELKNSAVSWLNATAIAVTEGTDRVIEVAQRAYRAILHIHRRIRQGLERLLL.

Residues 1 to 31 form the signal peptide; that stretch reads MKVKGTRRNYQHLWRWGTLLLGMLMICSATE. The Extracellular portion of the chain corresponds to 32 to 683; the sequence is KLWVTVYYGV…ITNWLWYIKI (652 aa). Cys53 and Cys73 are disulfide-bonded. Residues Asn87, Asn129, Asn140, Asn154, Asn158, Asn184, Asn190, Asn200, Asn233, Asn244, Asn265, Asn279, Asn292, Asn298, Asn304, Asn334, Asn341, Asn358, and Asn364 are each glycosylated (N-linked (GlcNAc...) asparagine; by host). Intrachain disulfides connect Cys118–Cys208, Cys125–Cys199, Cys130–Cys155, Cys221–Cys250, and Cys231–Cys242. The V1 stretch occupies residues 130 to 154; it reads CTDLGKATNTNSSNWKEEIKGEIKN. The interval 155–199 is V2; it reads CSFNITTSIRDKIQKENALFRNLDVVPIDNASTTTNYTNYRLIHC. Residues 299-332 are V3; sequence CTRPNNNTRKSIYIGPGRAFHTTGRIIGDIRKAH. Cys299 and Cys333 form a disulfide bridge. The CD4-binding loop stretch occupies residues 366–376; sequence SSGGDPEIVMH. 2 disulfides stabilise this stretch: Cys380/Cys442 and Cys387/Cys415. The tract at residues 387–415 is V4; the sequence is CNTTQLFNNTWRLNHTEGTKGNDTIILPC. Asn388, Asn394, Asn400, Asn408, Asn445, Asn458, and Asn461 each carry an N-linked (GlcNAc...) asparagine; by host glycan. V5 regions lie at residues 458-469 and 460-469; these read NVTNDTEVFRPG and TNDTEVFRPG. Residues 510–531 form a fusion peptide region; it reads AVGIVGAMFLGFLGAAGSTMGA. An immunosuppression region spans residues 573–591; sequence KQLQARVLAVERYLRDQQL. Cysteines 597 and 603 form a disulfide. N-linked (GlcNAc...) asparagine; by host glycans are attached at residues Asn610, Asn615, Asn624, and Asn636. Positions 632 to 666 form a coiled coil; the sequence is REIDNYTNTIYTLLEESQNQQEKNEQELLELDKWA. Residues 661–682 form an MPER; binding to GalCer region; it reads ELDKWASLWNWFSITNWLWYIK. Residues 684–704 traverse the membrane as a helical segment; that stretch reads FIMIVGGLVGLRIVFAVLSIV. At 705–855 the chain is on the cytoplasmic side; sequence NRVRQGYSPL…IRQGLERLLL (151 aa). The YXXL motif; contains endocytosis signal motif lies at 711–714; the sequence is YSPL. The tract at residues 720–739 is disordered; sequence LPVPRGPDRPDGIEEEGGER. A lipid anchor (S-palmitoyl cysteine; by host) is attached at Cys763. The short motif at 854–855 is the Di-leucine internalization motif element; that stretch reads LL.

Belongs to the HIV-1 env protein family. The mature envelope protein (Env) consists of a homotrimer of non-covalently associated gp120-gp41 heterodimers. The resulting complex protrudes from the virus surface as a spike. There seems to be as few as 10 spikes on the average virion. Interacts with host CD4, CCR5 and CXCR4. Gp120 also interacts with the C-type lectins CD209/DC-SIGN and CLEC4M/DC-SIGNR (collectively referred to as DC-SIGN(R)). Gp120 and gp41 interact with GalCer. Gp120 interacts with host ITGA4/ITGB7 complex; on CD4+ T-cells, this interaction results in rapid activation of integrin ITGAL/LFA-1, which facilitates efficient cell-to-cell spreading of HIV-1. Gp120 interacts with cell-associated heparan sulfate; this interaction increases virus infectivity on permissive cells and may be involved in infection of CD4- cells. As to quaternary structure, the mature envelope protein (Env) consists of a homotrimer of non-covalently associated gp120-gp41 heterodimers. The resulting complex protrudes from the virus surface as a spike. There seems to be as few as 10 spikes on the average virion. In terms of processing, highly glycosylated by host. The high number of glycan on the protein is reffered to as 'glycan shield' because it contributes to hide protein sequence from adaptive immune system. Post-translationally, palmitoylation of the transmembrane protein and of Env polyprotein (prior to its proteolytic cleavage) is essential for their association with host cell membrane lipid rafts. Palmitoylation is therefore required for envelope trafficking to classical lipid rafts, but not for viral replication. Specific enzymatic cleavages in vivo yield mature proteins. Envelope glycoproteins are synthesized as an inactive precursor that is heavily N-glycosylated and processed likely by host cell furin in the Golgi to yield the mature SU and TM proteins. The cleavage site between SU and TM requires the minimal sequence [KR]-X-[KR]-R. About 2 of the 9 disulfide bonds of gp41 are reduced by P4HB/PDI, following binding to CD4 receptor.

Its subcellular location is the virion membrane. It localises to the host cell membrane. It is found in the host endosome membrane. Its function is as follows. Oligomerizes in the host endoplasmic reticulum into predominantly trimers. In a second time, gp160 transits in the host Golgi, where glycosylation is completed. The precursor is then proteolytically cleaved in the trans-Golgi and thereby activated by cellular furin or furin-like proteases to produce gp120 and gp41. In terms of biological role, attaches the virus to the host lymphoid cell by binding to the primary receptor CD4. This interaction induces a structural rearrangement creating a high affinity binding site for a chemokine coreceptor like CXCR4 and/or CCR5. Acts as a ligand for CD209/DC-SIGN and CLEC4M/DC-SIGNR, which are respectively found on dendritic cells (DCs), and on endothelial cells of liver sinusoids and lymph node sinuses. These interactions allow capture of viral particles at mucosal surfaces by these cells and subsequent transmission to permissive cells. HIV subverts the migration properties of dendritic cells to gain access to CD4+ T-cells in lymph nodes. Virus transmission to permissive T-cells occurs either in trans (without DCs infection, through viral capture and transmission), or in cis (following DCs productive infection, through the usual CD4-gp120 interaction), thereby inducing a robust infection. In trans infection, bound virions remain infectious over days and it is proposed that they are not degraded, but protected in non-lysosomal acidic organelles within the DCs close to the cell membrane thus contributing to the viral infectious potential during DCs' migration from the periphery to the lymphoid tissues. On arrival at lymphoid tissues, intact virions recycle back to DCs' cell surface allowing virus transmission to CD4+ T-cells. Acts as a class I viral fusion protein. Under the current model, the protein has at least 3 conformational states: pre-fusion native state, pre-hairpin intermediate state, and post-fusion hairpin state. During fusion of viral and target intracellular membranes, the coiled coil regions (heptad repeats) assume a trimer-of-hairpins structure, positioning the fusion peptide in close proximity to the C-terminal region of the ectodomain. The formation of this structure appears to drive apposition and subsequent fusion of viral and target cell membranes. Complete fusion occurs in host cell endosomes and is dynamin-dependent, however some lipid transfer might occur at the plasma membrane. The virus undergoes clathrin-dependent internalization long before endosomal fusion, thus minimizing the surface exposure of conserved viral epitopes during fusion and reducing the efficacy of inhibitors targeting these epitopes. Membranes fusion leads to delivery of the nucleocapsid into the cytoplasm. This is Envelope glycoprotein gp160 from Homo sapiens (Human).